A 352-amino-acid chain; its full sequence is Biotin synthase (352 aa).

In terms of domain architecture, Radical SAM core spans 44 to 262 (NRVQVSTLLS…LAVARILMPK (219 aa)). Positions 59, 63, and 66 each coordinate [4Fe-4S] cluster. C103, C134, C194, and R266 together coordinate [2Fe-2S] cluster.

It belongs to the radical SAM superfamily. Biotin synthase family. In terms of assembly, homodimer. [4Fe-4S] cluster is required as a cofactor. Requires [2Fe-2S] cluster as cofactor.

It catalyses the reaction (4R,5S)-dethiobiotin + (sulfur carrier)-SH + 2 reduced [2Fe-2S]-[ferredoxin] + 2 S-adenosyl-L-methionine = (sulfur carrier)-H + biotin + 2 5'-deoxyadenosine + 2 L-methionine + 2 oxidized [2Fe-2S]-[ferredoxin]. The protein operates within cofactor biosynthesis; biotin biosynthesis; biotin from 7,8-diaminononanoate: step 2/2. Its function is as follows. Catalyzes the conversion of dethiobiotin (DTB) to biotin by the insertion of a sulfur atom into dethiobiotin via a radical-based mechanism. The sequence is that of Biotin synthase from Pseudomonas entomophila (strain L48).